The following is a 334-amino-acid chain: tRNA U34 carboxymethyltransferase (334 aa).

Residues Lys91, Trp105, Lys110, Gly130, 152–154, 181–182, Met196, Tyr200, and Arg315 contribute to the carboxy-S-adenosyl-L-methionine site; these read DPT and IE.

This sequence belongs to the class I-like SAM-binding methyltransferase superfamily. CmoB family. Homotetramer.

The enzyme catalyses carboxy-S-adenosyl-L-methionine + 5-hydroxyuridine(34) in tRNA = 5-carboxymethoxyuridine(34) in tRNA + S-adenosyl-L-homocysteine + H(+). Functionally, catalyzes carboxymethyl transfer from carboxy-S-adenosyl-L-methionine (Cx-SAM) to 5-hydroxyuridine (ho5U) to form 5-carboxymethoxyuridine (cmo5U) at position 34 in tRNAs. The sequence is that of tRNA U34 carboxymethyltransferase from Klebsiella pneumoniae subsp. pneumoniae (strain ATCC 700721 / MGH 78578).